A 312-amino-acid polypeptide reads, in one-letter code: Ubiquinone biosynthesis protein COQ9, mitochondrial (312 aa).

A mitochondrion-targeting transit peptide spans Met-1 to Arg-45. The short motif at Arg-17 to Pro-32 is the SIFI-degron element. Residues Gly-43–Gln-92 form a disordered region. The segment covering Gln-52–Glu-63 has biased composition (low complexity). Position 80 is a phosphoserine (Ser-80). The segment covering Ser-80–Glu-91 has biased composition (acidic residues). Residue Lys-169 is modified to N6-acetyllysine. Arg-238 serves as a coordination point for a 1,2-diacylglycero-3-phosphoethanolamine.

The protein belongs to the COQ9 family. As to quaternary structure, homodimer. Heterodimer; two heterodimers of COQ7:COQ9 come together on the same side of the lipid pseudo-bilayer and form a curved tetramer with a hydrophobic surface suitable for membrane interaction. These two tetramers assemble into a soluble octamer with a pseudo-bilayer of lipids captured within. Interacts with COQ7; this interaction allows ubiquinone (CoQ) isoprene intermediates presentation to COQ7 and facilitates the COQ7-mediated hydroxylase step. In terms of processing, in response to mitochondrial stress, the precursor protein is ubiquitinated by the SIFI complex in the cytoplasm before mitochondrial import, leading to its degradation. Within the SIFI complex, UBR4 initiates ubiquitin chain that are further elongated or branched by KCMF1.

The protein localises to the mitochondrion. It functions in the pathway cofactor biosynthesis; ubiquinone biosynthesis. Membrane-associated protein that warps the membrane surface to access and bind aromatic isoprenes with high specificity, including ubiquinone (CoQ) isoprene intermediates and presents them directly to COQ7, therefore facilitating the COQ7-mediated hydroxylase step. Participates in the biosynthesis of coenzyme Q, also named ubiquinone, an essential lipid-soluble electron transporter for aerobic cellular respiration. This is Ubiquinone biosynthesis protein COQ9, mitochondrial from Rattus norvegicus (Rat).